The primary structure comprises 535 residues: MRISLKKSGMLKLGLSLVAMTVAASVQAKTLVYCSEGSPEGFNPQLFTSGTTYDASSVPLYNRLVEFKIGTTEVIPGLAEKWEVSEDGKTYTFHLRKGVKWHDNKEFKPTRELNADDVVFSFDRQKNAQNPYHKVSGGSYEYFEGMGLPELISEVKKVDDNTVQFVLTRPEAPFLADLAMDFASILSKEYADAMMKAGTPEKLDLNPIGTGPFQLQQYQKDSRIRYKAFDGYWGTKPQIDTLVFSITPDASVRYAKLQKNECQVMPYPNPADIARMKQDKSINLMEMPGLNVGYLSYNVQKKPLDDVKVRQALTYAVNKDAIIKAVYQGAGVSAKNLIPPTMWGYNDDVQDYTYDPEKAKALLKEAGLEKGFSIDLWAMPVQRPYNPNARRMAEMIQADWAKVGVQAKIVTYEWGEYLKRAKDGEHQTVMMGWTGDNGDPDNFFATLFSCAASEQGSNYSKWCYKPFEDLIQPARATDDHNKRVELYKQAQVVMHDQAPALIIAHSTVFEPVRKEVKGYVVDPLGKHHFENVSIE.

Positions 1–28 (MRISLKKSGMLKLGLSLVAMTVAASVQA) are cleaved as a signal peptide. A disulfide bridge links cysteine 34 with cysteine 262. Glycyl-L-leucine-binding positions include 48 to 50 (TSG), 383 to 385 (RPY), and 433 to 436 (WTGD). An intrachain disulfide couples cysteine 450 to cysteine 463.

This sequence belongs to the bacterial solute-binding protein 5 family. As to quaternary structure, the complex is composed of two ATP-binding proteins (DppD and DppF), two transmembrane proteins (DppB and DppC) and a solute-binding protein (DppA).

It is found in the periplasm. Its activity is regulated as follows. Heme binding is inhibited by dipeptide. Functionally, part of the ABC transporter DppABCDF involved in dipeptide transport. Binds dipeptides and accepts a wide range of side chains, including small neutral, bulky hydrophobic, and positively and negatively charged groups. Tripeptides are poor substrates. DppA alone controls the specificity of the Dpp transporter. In addition, plays a role in chemotaxis toward peptides via interaction with the chemotaxis protein Tap. Binds heme. When a foreign outer membrane heme receptor is expressed in E.coli, DppABCDF can also transport heme and its precursor, 5-aminolevulinic acid (ALA), from the periplasm into the cytoplasm. This chain is Dipeptide-binding protein, found in Escherichia coli (strain K12).